A 358-amino-acid chain; its full sequence is Peptide chain release factor 1 (358 aa).

Gln235 carries the post-translational modification N5-methylglutamine.

Belongs to the prokaryotic/mitochondrial release factor family. In terms of processing, methylated by PrmC. Methylation increases the termination efficiency of RF1.

It localises to the cytoplasm. Its function is as follows. Peptide chain release factor 1 directs the termination of translation in response to the peptide chain termination codons UAG and UAA. In Neisseria meningitidis serogroup B (strain ATCC BAA-335 / MC58), this protein is Peptide chain release factor 1.